Reading from the N-terminus, the 430-residue chain is MKETIDFLIDTIEARQVLDSRGNPTVEAEVFLECGASGIAIVPSGASTGAHEAHELRDGGSKYMGKGVLSAVNKIHETISPALCGLSALDQTAVDKLMTEIDGTLNKSNLGANSILAVSLATARASANALDIPLYRYLGDPLSNLLPVPLMNVINGGAHAPNSLDFQEFMLVPHGVNNFSESLRMGTEIFHSLKSLLDQKGLSTAVGDEGGFAPNLSSSEEAGDLLLEAIQKAGFKPGEQVSLALDAASTEFYNDGIYKYEGKSLNSSEMISYLSRLVSNYPIVSIEDGLAEDDWEGWSELNKELGDKVQLVGDDLFVTNTERLRKGIMEKSANSILIKVNQIGTLTETLEAIELAKMSGFTSVISHRSGETEDTTIADLSVATRSGQIKTGSLSRSERIAKYNRLLKIEEELGNQARFAGALGLGPKNI.

A (2R)-2-phosphoglycerate-binding site is contributed by Gln167. Glu209 acts as the Proton donor in catalysis. Positions 246, 287, and 314 each coordinate Mg(2+). Lys339, Arg368, Ser369, and Lys390 together coordinate (2R)-2-phosphoglycerate. The Proton acceptor role is filled by Lys339.

The protein belongs to the enolase family. It depends on Mg(2+) as a cofactor.

The protein localises to the cytoplasm. It is found in the secreted. Its subcellular location is the cell surface. It catalyses the reaction (2R)-2-phosphoglycerate = phosphoenolpyruvate + H2O. It functions in the pathway carbohydrate degradation; glycolysis; pyruvate from D-glyceraldehyde 3-phosphate: step 4/5. In terms of biological role, catalyzes the reversible conversion of 2-phosphoglycerate (2-PG) into phosphoenolpyruvate (PEP). It is essential for the degradation of carbohydrates via glycolysis. The protein is Enolase of Prochlorococcus marinus (strain MIT 9215).